The primary structure comprises 244 residues: NAD(P)H-quinone oxidoreductase subunit K (244 aa).

Residues Cys60, Cys61, Cys125, and Cys156 each contribute to the [4Fe-4S] cluster site. The segment covering 221–236 (SKKEKITELPENREQT) has biased composition (basic and acidic residues). The disordered stretch occupies residues 221–244 (SKKEKITELPENREQTEIINSEEE).

The protein belongs to the complex I 20 kDa subunit family. As to quaternary structure, NDH-1 can be composed of about 15 different subunits; different subcomplexes with different compositions have been identified which probably have different functions. It depends on [4Fe-4S] cluster as a cofactor.

It localises to the cellular thylakoid membrane. The enzyme catalyses a plastoquinone + NADH + (n+1) H(+)(in) = a plastoquinol + NAD(+) + n H(+)(out). The catalysed reaction is a plastoquinone + NADPH + (n+1) H(+)(in) = a plastoquinol + NADP(+) + n H(+)(out). NDH-1 shuttles electrons from an unknown electron donor, via FMN and iron-sulfur (Fe-S) centers, to quinones in the respiratory and/or the photosynthetic chain. The immediate electron acceptor for the enzyme in this species is believed to be plastoquinone. Couples the redox reaction to proton translocation, and thus conserves the redox energy in a proton gradient. Cyanobacterial NDH-1 also plays a role in inorganic carbon-concentration. This Prochlorococcus marinus (strain MIT 9312) protein is NAD(P)H-quinone oxidoreductase subunit K.